A 275-amino-acid chain; its full sequence is 4-hydroxy-3-methylbut-2-enyl diphosphate reductase (275 aa).

Cysteine 12 serves as a coordination point for [4Fe-4S] cluster. (2E)-4-hydroxy-3-methylbut-2-enyl diphosphate is bound by residues histidine 40 and histidine 70. Positions 40 and 70 each coordinate dimethylallyl diphosphate. 2 residues coordinate isopentenyl diphosphate: histidine 40 and histidine 70. Residue cysteine 92 participates in [4Fe-4S] cluster binding. Position 119 (histidine 119) interacts with (2E)-4-hydroxy-3-methylbut-2-enyl diphosphate. Histidine 119 serves as a coordination point for dimethylallyl diphosphate. Histidine 119 is an isopentenyl diphosphate binding site. The active-site Proton donor is the glutamate 121. Threonine 151 provides a ligand contact to (2E)-4-hydroxy-3-methylbut-2-enyl diphosphate. Cysteine 181 lines the [4Fe-4S] cluster pocket. The (2E)-4-hydroxy-3-methylbut-2-enyl diphosphate site is built by serine 209, serine 210, asparagine 211, and serine 251. 4 residues coordinate dimethylallyl diphosphate: serine 209, serine 210, asparagine 211, and serine 251. Residues serine 209, serine 210, asparagine 211, and serine 251 each coordinate isopentenyl diphosphate.

The protein belongs to the IspH family. [4Fe-4S] cluster is required as a cofactor.

The catalysed reaction is isopentenyl diphosphate + 2 oxidized [2Fe-2S]-[ferredoxin] + H2O = (2E)-4-hydroxy-3-methylbut-2-enyl diphosphate + 2 reduced [2Fe-2S]-[ferredoxin] + 2 H(+). It catalyses the reaction dimethylallyl diphosphate + 2 oxidized [2Fe-2S]-[ferredoxin] + H2O = (2E)-4-hydroxy-3-methylbut-2-enyl diphosphate + 2 reduced [2Fe-2S]-[ferredoxin] + 2 H(+). Its pathway is isoprenoid biosynthesis; dimethylallyl diphosphate biosynthesis; dimethylallyl diphosphate from (2E)-4-hydroxy-3-methylbutenyl diphosphate: step 1/1. It functions in the pathway isoprenoid biosynthesis; isopentenyl diphosphate biosynthesis via DXP pathway; isopentenyl diphosphate from 1-deoxy-D-xylulose 5-phosphate: step 6/6. Catalyzes the conversion of 1-hydroxy-2-methyl-2-(E)-butenyl 4-diphosphate (HMBPP) into a mixture of isopentenyl diphosphate (IPP) and dimethylallyl diphosphate (DMAPP). Acts in the terminal step of the DOXP/MEP pathway for isoprenoid precursor biosynthesis. In Thermotoga petrophila (strain ATCC BAA-488 / DSM 13995 / JCM 10881 / RKU-1), this protein is 4-hydroxy-3-methylbut-2-enyl diphosphate reductase.